The chain runs to 337 residues: Palmitoyltransferase ZDHHC15 (337 aa).

Topologically, residues 1–20 are cytoplasmic; it reads MRRGWKMALSGGLRCCRRVL. A helical transmembrane segment spans residues 21–41; it reads SWVPVLVIVLVVLWSYYAYVF. Residues 42-56 lie on the Lumenal side of the membrane; that stretch reads ELCLVTVLSPAEKVI. Residues 57-77 traverse the membrane as a helical segment; it reads YLILYHAIFVFFTWTYWKSIF. Residues 78-172 are Cytoplasmic-facing; sequence TLPQQPNQKF…NNCIGFSNYK (95 aa). Residues 129–179 form the DHHC domain; sequence RFCDRCHLIKPDRCHHCSVCAMCVLKMDHHCPWVNNCIGFSNYKFFLQFLA. The Zn(2+) site is built by Cys-131, Cys-134, His-144, Cys-145, Cys-148, Cys-151, and His-158. Cys-159 acts as the S-palmitoyl cysteine intermediate in catalysis. Cys-165 provides a ligand contact to Zn(2+). The chain crosses the membrane as a helical span at residues 173 to 193; the sequence is FFLQFLAYSVLYCLYIATTVF. Residues 194–210 are Lumenal-facing; it reads SYFIKYWRGELPSVRSK. The helical transmembrane segment at 211–234 threads the bilayer; it reads FHVLFLLFVACMFFVSLVILFGYH. The Cytoplasmic segment spans residues 235–337; that stretch reads CWLVSRNKTT…SSSLAVETET (103 aa). The interval 306-337 is disordered; the sequence is PLLANEETWEDNEDDNQDYPEGSSSLAVETET. The span at 312–323 shows a compositional bias: acidic residues; that stretch reads ETWEDNEDDNQD. Over residues 327-337 the composition is skewed to polar residues; it reads GSSSLAVETET.

The protein belongs to the DHHC palmitoyltransferase family. Autopalmitoylated (in vitro). Expressed in placenta, liver, lung, kidney, heart and brain.

The protein localises to the golgi apparatus membrane. It is found in the postsynaptic density. It catalyses the reaction L-cysteinyl-[protein] + hexadecanoyl-CoA = S-hexadecanoyl-L-cysteinyl-[protein] + CoA. It carries out the reaction L-cysteinyl-[protein] + tetradecanoyl-CoA = S-tetradecanoyl-L-cysteinyl-[protein] + CoA. The catalysed reaction is L-cysteinyl-[protein] + octadecanoyl-CoA = S-octadecanoyl-L-cysteinyl-[protein] + CoA. Functionally, palmitoyltransferase that catalyzes the addition of palmitate onto various protein substrates. Has no stringent fatty acid selectivity and in addition to palmitate can also transfer onto target proteins myristate from tetradecanoyl-CoA and stearate from octadecanoyl-CoA. Palmitoylates IGF2R and SORT1, promoting their partitioning to an endosomal membrane subdomain where they can interact with the retromer cargo-selective complex. Thereby, regulates retrograde transport from endosomes to the Golgi apparatus of these lysosomal sorting receptors and plays a role in trafficking of lysosomal proteins. In the nervous system, catalyzes the palmitoylation of DLG4/PSD95 and regulates its synaptic clustering and function in synaptogenesis. Could be involved in the differentiation of dopaminergic neurons and the development of the diencephalon. Could also catalyze the palmitoylation of GAP43. Could also palmitoylate DNAJC5 and regulate its localization to the Golgi membrane. Could also palmitoylate FYN as shown in vitro. May palmitoylate CALHM3 subunit of gustatory voltage-gated ion channels and modulate channel gating and kinetics. This chain is Palmitoyltransferase ZDHHC15, found in Homo sapiens (Human).